Reading from the N-terminus, the 487-residue chain is Solute carrier family 22 member 15-like (487 aa).

The chain crosses the membrane as a helical span at residues 22–42 (AFLTLLQVYVACQSMLIVLVG). An N-linked (GlcNAc...) asparagine glycan is attached at asparagine 70. 11 helical membrane-spanning segments follow: residues 90–110 (LASSLFFAGLLIGNILFGPLS), 117–137 (PVYLSGLFFDITFGYCTALAP), 141–161 (VFAVSRFFVGIMNGGMALVSF), 178–198 (SLTNLIFAVGIAFYALLGFYI), 203–223 (TLAFVANSPGIFFFLLSFLLP), 286–306 (ILLMYIWYVCSLVYYGLTLNA), 315–335 (LNVALYGLVEVPAFPLCLYFI), 345–365 (ATAGFLGFAGFACIFTIFLPE), 374–394 (TVLALFGKLSVSAAFNVVYIY), 406–426 (AGLGVCAMACRFGGILSPFIP), and 435–455 (MPFVAFGISGISAGILSLLLP).

This sequence belongs to the major facilitator (TC 2.A.1) superfamily. Organic cation transporter (TC 2.A.1.19) family.

It localises to the membrane. Probably transports organic cations. This is Solute carrier family 22 member 15-like (slc22a15b) from Xenopus tropicalis (Western clawed frog).